The following is a 297-amino-acid chain: MNQKTPSTVEEIRIALQELGLSTNGNKEKLKRRWKFREKRLEEKRKQERYQKFSTSNENKTCLRYLLIVDVEATCEEGCGFSFENEIIELPCLLFDLIEKSIIDEFHSYVRPSMNPTLSDYCKSLTGIQQCTVDKAPIFSDVLEELFIFLRKHSNILVPSVDEIEIIEPLKSVPRTQPKNWAWACDGPWDMASFLAKQFKYDKMPIPDWIKGPFVDIRSFYKDVYRVPRTNINGMLEHWGLQFEGSEHRGIDDARNLSRIVKKMCSENVEFECNRWWMEYEKNGWIPNRSYPPYFAS.

The SAP domain occupies 4-38 (KTPSTVEEIRIALQELGLSTNGNKEKLKRRWKFRE). Residues 68 to 153 (IVDVEATCEE…EELFIFLRKH (86 aa)) enclose the Exonuclease domain. Positions 70 and 72 each coordinate Mg(2+). Glu72 acts as the Proton acceptor in catalysis. The AMP site is built by Glu72 and Ala73. Asp190 provides a ligand contact to Mg(2+). Residue His248 is the Proton acceptor of the active site. His248 contacts AMP. A Mg(2+)-binding site is contributed by Asp253.

Mg(2+) serves as cofactor.

It localises to the cytoplasm. Functionally, RNA exonuclease that acts as a negative regulator of RNA interference (RNAi). Acts by degrading the 3'-overhangs of double-stranded short interfering RNAs (siRNAs). Represses the accumulation of heterochromatic siRNAs leading to negative regulation of the RNAi-mediated heterochromoatin assembly. Also involved in rRNA biogenesis, trimming the 5.8S ribosomal RNA (rRNA) from a slightly longer pre-5.8S RNA in the cytoplasm. The sequence is that of 3'-5' exonuclease eri1 (eri1) from Schizosaccharomyces pombe (strain 972 / ATCC 24843) (Fission yeast).